The chain runs to 313 residues: Ribosomal RNA small subunit methyltransferase H (313 aa).

S-adenosyl-L-methionine contacts are provided by residues 34–36 (GGH), Asp55, Phe82, Asp103, and Gln110.

It belongs to the methyltransferase superfamily. RsmH family.

The protein resides in the cytoplasm. It carries out the reaction cytidine(1402) in 16S rRNA + S-adenosyl-L-methionine = N(4)-methylcytidine(1402) in 16S rRNA + S-adenosyl-L-homocysteine + H(+). Functionally, specifically methylates the N4 position of cytidine in position 1402 (C1402) of 16S rRNA. The protein is Ribosomal RNA small subunit methyltransferase H of Pelobacter propionicus (strain DSM 2379 / NBRC 103807 / OttBd1).